Here is a 594-residue protein sequence, read N- to C-terminus: Potassium-transporting ATPase potassium-binding subunit (594 aa).

10 consecutive transmembrane segments (helical) span residues 3 to 23 (ADFL…APLL), 67 to 87 (AVAM…LQRL), 136 to 156 (ALTV…IALV), 179 to 199 (LYVL…QGVV), 287 to 307 (LEML…GEMV), 314 to 334 (VAIL…AAYF), 415 to 435 (GLYG…LMIG), 453 to 473 (VALV…VAVL), 519 to 539 (VLLG…ILAL), and 562 to 582 (LFVA…YVPA).

Belongs to the KdpA family. The system is composed of three essential subunits: KdpA, KdpB and KdpC.

It is found in the cell inner membrane. Functionally, part of the high-affinity ATP-driven potassium transport (or Kdp) system, which catalyzes the hydrolysis of ATP coupled with the electrogenic transport of potassium into the cytoplasm. This subunit binds the periplasmic potassium ions and delivers the ions to the membrane domain of KdpB through an intramembrane tunnel. In Bordetella bronchiseptica (strain ATCC BAA-588 / NCTC 13252 / RB50) (Alcaligenes bronchisepticus), this protein is Potassium-transporting ATPase potassium-binding subunit.